Reading from the N-terminus, the 170-residue chain is Photosystem II extrinsic protein V (170 aa).

Positions 1 to 33 are cleaved as a signal peptide; sequence MVSVFSSLRQSFKGLLVLVPVLIGLAFISPAEA. Heme c contacts are provided by Cys70, Cys73, His74, and Met137.

It belongs to the cytochrome c family. PsbV subfamily. PSII is composed of 1 copy each of membrane proteins PsbA, PsbB, PsbC, PsbD, PsbE, PsbF, PsbH, PsbI, PsbJ, PsbK, PsbL, PsbM, PsbT, PsbX, PsbY, PsbZ, Psb30/Ycf12, peripheral proteins PsbO, CyanoQ (PsbQ), PsbU, PsbV and a large number of cofactors. It forms dimeric complexes. The cofactor is heme c.

Its subcellular location is the cellular thylakoid membrane. Its function is as follows. One of the extrinsic, lumenal subunits of photosystem II (PSII). PSII is a light-driven water plastoquinone oxidoreductase, using light energy to abstract electrons from H(2)O, generating a proton gradient subsequently used for ATP formation. The extrinsic proteins stabilize the structure of photosystem II oxygen-evolving complex (OEC), the ion environment of oxygen evolution and protect the OEC against heat-induced inactivation. Low-potential cytochrome c that plays a role in the OEC of PSII. This is Photosystem II extrinsic protein V from Synechococcus sp. (strain CC9902).